Consider the following 141-residue polypeptide: MAWPLCTLLLLLATQAVALAWSPQEEDRIIEGGIYDADLNDERVQRALHFVISEYNKATEDEYYRRLLRVLRAREQIVGGVNYFFDIEVGRTICTKSQPNLDTCAFHEQPELQKKQLCSFQIYEVPWEDRMSLVNSRCQEA.

An N-terminal signal peptide occupies residues 1 to 20 (MAWPLCTLLLLLATQAVALA). Positions 76-80 (QIVGG) match the Secondary area of contact motif. 2 disulfide bridges follow: cysteine 94/cysteine 104 and cysteine 118/cysteine 138.

Expressed in submandibular and sublingual saliva but not in parotid saliva (at protein level). Expressed in submandibular gland and parotid gland.

Its subcellular location is the secreted. Its function is as follows. Thiol protease inhibitor. The sequence is that of Cystatin-SA (CST2) from Homo sapiens (Human).